The following is a 163-amino-acid chain: MSTADRYRKVFPVTWEQLHRDAKALSWRLLEKGPYKGIIAIARGGLVPAAVIARELDIHLVETICISSYQWQEQTSSHKVLKTVEGRGEGWLIIDDLVDTGGTARLVREMLPEAHFATVYAKPAGRPLVDTFITEVSQDTWILFPWDSEVQYVVPLVNQPQQS.

Residues 43-44 (RG) and 95-103 (DDLVDTGGT) each bind 5-phospho-alpha-D-ribose 1-diphosphate. Residue aspartate 96 participates in Mg(2+) binding. Guanine contacts are provided by aspartate 99 and isoleucine 142. 2 residues coordinate xanthine: aspartate 99 and isoleucine 142. GMP-binding positions include 99–103 (DTGGT) and 141–142 (WI).

It belongs to the purine/pyrimidine phosphoribosyltransferase family. XGPT subfamily. Homotetramer. The cofactor is Mg(2+).

The protein resides in the cell inner membrane. The catalysed reaction is GMP + diphosphate = guanine + 5-phospho-alpha-D-ribose 1-diphosphate. It catalyses the reaction XMP + diphosphate = xanthine + 5-phospho-alpha-D-ribose 1-diphosphate. The enzyme catalyses IMP + diphosphate = hypoxanthine + 5-phospho-alpha-D-ribose 1-diphosphate. The protein operates within purine metabolism; GMP biosynthesis via salvage pathway; GMP from guanine: step 1/1. Its pathway is purine metabolism; XMP biosynthesis via salvage pathway; XMP from xanthine: step 1/1. Functionally, purine salvage pathway enzyme that catalyzes the transfer of the ribosyl-5-phosphate group from 5-phospho-alpha-D-ribose 1-diphosphate (PRPP) to the N9 position of the 6-oxopurines guanine and xanthine to form the corresponding ribonucleotides GMP (guanosine 5'-monophosphate) and XMP (xanthosine 5'-monophosphate), with the release of PPi. To a lesser extent, also acts on hypoxanthine. The protein is Xanthine-guanine phosphoribosyltransferase of Nitratidesulfovibrio vulgaris (strain DP4) (Desulfovibrio vulgaris).